The chain runs to 347 residues: Dual specificity mitogen-activated protein kinase kinase mek-1 (347 aa).

Positions 1 to 42 are disordered; the sequence is MERDFDLGMGRPGGLGGLGGEPIMQQMPQPAPHHPSRSSNDH. Gly residues predominate over residues 10–20; the sequence is GRPGGLGGLGG. The Protein kinase domain occupies 72 to 325; sequence LQFVEDIGHG…YDMLLQHPFV (254 aa). ATP is bound by residues 78 to 86 and Lys-99; that span reads IGHGSCGTV. Catalysis depends on Asp-193, which acts as the Proton acceptor. Phosphoserine is present on residues Ser-221 and Ser-225.

The protein belongs to the protein kinase superfamily. STE Ser/Thr protein kinase family. MAP kinase kinase subfamily. As to quaternary structure, interacts with shc-1; the interaction is independent of mek-1 catalytic activity, is constitutive and may facilitate mlk-1-mediated phosphorylation by bringing mlk-1 and mek-1 together. Requires Mg(2+) as cofactor. May be phosphorylated at Ser-221 and/or Ser-225 by mlk-1. Expressed in pharyngeal muscles, uterine endothelial cells, intestine and in neurons of ring ganglia, ventral ganglion and ganglia around anus. Expressed also in hypodermis and body muscles.

The catalysed reaction is L-seryl-[protein] + ATP = O-phospho-L-seryl-[protein] + ADP + H(+). It catalyses the reaction L-threonyl-[protein] + ATP = O-phospho-L-threonyl-[protein] + ADP + H(+). The enzyme catalyses L-tyrosyl-[protein] + ATP = O-phospho-L-tyrosyl-[protein] + ADP + H(+). May be activated by phosphorylation at Ser-221 and Ser-225. Functionally, dual specificity protein kinase which may phosphorylate kgb-1 and thereby is an essential component of the JNK pathway composed of mlk-1, mek-1 and kgb-1. May also have a synergistic role with sek-1 in phosphorylating pmk-1. Involved in the response to environmental stress including heavy metal ions (Cu(2+) and Cd(2+)), oxidative stress and starvation. In association with sek-1, regulates germline cell apoptosis in response to oxidative, osmotic and heat shock stresses. Involved in resistance to pathogenic bacteria infection. Involved in axon regeneration after injury. The chain is Dual specificity mitogen-activated protein kinase kinase mek-1 from Caenorhabditis elegans.